The chain runs to 659 residues: MAVALRARNAVKVEDGIDTSNIIEEVDDNTKGTRSRASRRRRRRGDEEEKHSEEETYNEFNDDGTLKTEGTLQTGNGSGRPFELVAGLPCSLDVPQYNSALTFPLSVRDSGVLYSSLLSSRRTWISGEMFEVYWTRANKVPSLAIKDESIIKELESSKEQDASGKDRMQRMCDCELMAGPHTFSIKLFIVKDDEKEKKWQEEQEYKKKEKEEQKKLESEQRKKRAEEKKQMLQLKKQEREKQMQLQKEARARAKKEQAEARQRQKEEERQRKLMNKERVKEQKASTSKPKKDQNKKNSDQHMIANLNIMAQRDPELKKLMAKVANGQANMQEIEEFKRVIELAKNLPPPGTPPAKPEVQKAQSKPTDSNETSADSSKSEILQESKTNESDKKATAEQATEPKTHSEENKPESENQSRDNSEKSASSHNQEASIKKEADANSVIKKESSDGDGNKSQQPKRKYNKAPKVADELTEKEKEMQLTAFQQKYVTGAELVLEFAENTNFRFLLPKKAIIQYIPESNRYKMSWLQIHNQSDITRFYKRQVKELTRRIHNAEEKQRVTDEYNVFRDKKCPSPLFSSMTVTFSGIHVKFNSIMMNSFDPKEEVRGYMEDVLAVGTRLSGYNLWYQLDGYDDRELAERLRSELNEYEQSLKPKRQKKQ.

Disordered stretches follow at residues 28-68 (DNTK…TLKT), 203-309 (QEYK…LNIM), and 341-470 (ELAK…KVAD). Positions 33-43 (TRSRASRRRRR) are enriched in basic residues. Basic and acidic residues-rich tracts occupy residues 44–54 (RGDEEEKHSEE) and 203–299 (QEYK…KNSD). The stretch at 191–286 (KDDEKEKKWQ…ERVKEQKAST (96 aa)) forms a coiled coil. A compositionally biased stretch (pro residues) spans 346-355 (LPPPGTPPAK). Residues 360-375 (KAQSKPTDSNETSADS) are compositionally biased toward polar residues. The span at 376–421 (SKSEILQESKTNESDKKATAEQATEPKTHSEENKPESENQSRDNSE) shows a compositional bias: basic and acidic residues. Over residues 422–431 (KSASSHNQEA) the composition is skewed to polar residues. Over residues 432–452 (SIKKEADANSVIKKESSDGDG) the composition is skewed to basic and acidic residues.

This sequence belongs to the SWC3 family. As to quaternary structure, component of the SWR1 chromatin remodeling complex.

The protein localises to the nucleus. Functionally, component of the SWR1 complex which mediates the ATP-dependent exchange of histone H2A for the H2A variant HZT1 leading to transcriptional regulation of selected genes by chromatin remodeling. Involved in chromosome stability. The polypeptide is SWR1-complex protein 3 (SWC3) (Candida glabrata (strain ATCC 2001 / BCRC 20586 / JCM 3761 / NBRC 0622 / NRRL Y-65 / CBS 138) (Yeast)).